The primary structure comprises 1024 residues: Multidrug resistance protein MdtC (1024 aa).

11 helical membrane-spanning segments follow: residues 15 to 35, 333 to 353, 360 to 380, 387 to 407, 431 to 451, 463 to 483, 528 to 548, 853 to 873, 897 to 917, 953 to 973, and 984 to 1004; these read WLLT…LPVA, EVEQ…FAFL, LIPA…MYLC, LSLM…IVVL, VGFT…PLLL, FAIT…TLTP, WGLL…ISIP, LWLI…LYES, LFNA…IGIV, PIIM…LGSG, and ITIV…TPVV.

The protein belongs to the resistance-nodulation-cell division (RND) (TC 2.A.6) family. MdtC subfamily. In terms of assembly, part of a tripartite efflux system composed of MdtA, MdtB and MdtC. MdtC forms a heteromultimer with MdtB.

It is found in the cell inner membrane. This Erwinia tasmaniensis (strain DSM 17950 / CFBP 7177 / CIP 109463 / NCPPB 4357 / Et1/99) protein is Multidrug resistance protein MdtC.